The sequence spans 114 residues: DNA-directed RNA polymerase subunit Rpo4 (114 aa).

Belongs to the eukaryotic RPB4 RNA polymerase subunit family. Part of the 13-subunit RNA polymerase complex. Forms a stalk with Rpo7 that extends from the main structure. In terms of processing, in purified enzyme appears as 5 forms, each differing by about 200 Da of a covalently bound, negatively charged residue. Not glycosylated.

It is found in the cytoplasm. It catalyses the reaction RNA(n) + a ribonucleoside 5'-triphosphate = RNA(n+1) + diphosphate. DNA-dependent RNA polymerase catalyzes the transcription of DNA into RNA using the four ribonucleoside triphosphates as substrates. This subunit is less well bound than the others. Probably not involved in transcription initiation. The polypeptide is DNA-directed RNA polymerase subunit Rpo4 (Sulfolobus acidocaldarius (strain ATCC 33909 / DSM 639 / JCM 8929 / NBRC 15157 / NCIMB 11770)).